Consider the following 308-residue polypeptide: MSPSMSIEALDQPVKPVVFRPLTLRRRIKNSVATTFFFTSFVVALIPLVWLLWVVIARGWFAVTRSGWWTHSLRGVLPEQFAGGVYHALYGTLVQAGVAAVLAVPLGLMTAVYLVEYGTGRMSRVTTFTVDVLAGVPSIVAALFVFSLWIATLGFQQSAFAVALALVLLMLPVVVRAGEEMLRLVPDELREASYALGVPKWKTIVRIVAPIAMPGIVSGILLSIARVVGETAPVLVLVGYSHSINLDVFHGNMASLPLLIYTELTNPEHAGFLRVWGAALTLIIVVATINLAAAMIRFVATRRRRLPL.

6 helical membrane passes run 36-56, 96-116, 132-152, 155-175, 204-224, and 276-296; these read FFFT…WVVI, AGVA…YLVE, VLAG…WIAT, FQQS…PVVV, IVRI…LLSI, and WGAA…AAMI. Residues 89–297 enclose the ABC transmembrane type-1 domain; that stretch reads LYGTLVQAGV…TINLAAAMIR (209 aa).

The protein belongs to the binding-protein-dependent transport system permease family. CysTW subfamily. In terms of assembly, the complex is composed of two ATP-binding proteins (PstB), two transmembrane proteins (PstC and PstA) and a solute-binding protein (PstS).

It is found in the cell membrane. In terms of biological role, part of the binding-protein-dependent transport system for phosphate; probably responsible for the translocation of the substrate across the membrane. This Mycobacterium tuberculosis (strain ATCC 25618 / H37Rv) protein is Phosphate transport system permease protein PstA 1 (pstA1).